Consider the following 175-residue polypeptide: Probable DNA-directed RNA polymerase subunit delta (175 aa).

The HTH HARE-type domain occupies 14-81; the sequence is CSMIEVVHSV…GENRWGLRSW (68 aa). The tract at residues 91-175 is disordered; sequence ILPQPKPKKK…DETEEEEEEL (85 aa). The span at 106-175 shows a compositional bias: acidic residues; that stretch reads DGFDDYIEED…DETEEEEEEL (70 aa).

This sequence belongs to the RpoE family. As to quaternary structure, RNAP is composed of a core of 2 alpha, a beta and a beta' subunits. The core is associated with a delta subunit and one of several sigma factors.

Participates in both the initiation and recycling phases of transcription. In the presence of the delta subunit, RNAP displays an increased specificity of transcription, a decreased affinity for nucleic acids, and an increased efficiency of RNA synthesis because of enhanced recycling. This Bacillus anthracis protein is Probable DNA-directed RNA polymerase subunit delta.